The following is a 239-amino-acid chain: Ribulose-phosphate 3-epimerase (239 aa).

Residue serine 9 coordinates substrate. Positions 34, 36, and 78 each coordinate a divalent metal cation. Aspartate 36 (proton acceptor) is an active-site residue. Substrate is bound by residues histidine 78, 154–157, 183–185, and 205–207; these read GFGG, DGG, and GTS. Residue aspartate 183 participates in a divalent metal cation binding. The active-site Proton donor is the aspartate 183.

It belongs to the ribulose-phosphate 3-epimerase family. The cofactor is Co(2+). Fe(2+) serves as cofactor. Requires Mn(2+) as cofactor. It depends on Zn(2+) as a cofactor.

It catalyses the reaction D-ribulose 5-phosphate = D-xylulose 5-phosphate. The protein operates within carbohydrate degradation; pentose phosphate pathway; D-xylulose 5-phosphate from D-ribulose 5-phosphate (non-oxidative stage): step 1/1. Catalyzes the reversible epimerization of D-ribulose 5-phosphate to D-xylulose 5-phosphate. This Eremothecium gossypii (strain ATCC 10895 / CBS 109.51 / FGSC 9923 / NRRL Y-1056) (Yeast) protein is Ribulose-phosphate 3-epimerase (RPE1).